The following is a 156-amino-acid chain: ATP synthase subunit b (156 aa).

Residues Leu7–Leu29 traverse the membrane as a helical segment.

This sequence belongs to the ATPase B chain family. As to quaternary structure, F-type ATPases have 2 components, F(1) - the catalytic core - and F(0) - the membrane proton channel. F(1) has five subunits: alpha(3), beta(3), gamma(1), delta(1), epsilon(1). F(0) has three main subunits: a(1), b(2) and c(10-14). The alpha and beta chains form an alternating ring which encloses part of the gamma chain. F(1) is attached to F(0) by a central stalk formed by the gamma and epsilon chains, while a peripheral stalk is formed by the delta and b chains.

It localises to the cell inner membrane. Its function is as follows. F(1)F(0) ATP synthase produces ATP from ADP in the presence of a proton or sodium gradient. F-type ATPases consist of two structural domains, F(1) containing the extramembraneous catalytic core and F(0) containing the membrane proton channel, linked together by a central stalk and a peripheral stalk. During catalysis, ATP synthesis in the catalytic domain of F(1) is coupled via a rotary mechanism of the central stalk subunits to proton translocation. Component of the F(0) channel, it forms part of the peripheral stalk, linking F(1) to F(0). This is ATP synthase subunit b from Burkholderia vietnamiensis (strain G4 / LMG 22486) (Burkholderia cepacia (strain R1808)).